The sequence spans 408 residues: Cytochrome bc1 complex Rieske iron-sulfur subunit (408 aa).

Transmembrane regions (helical) follow at residues 56–76 (VTFW…TYIF), 98–118 (MLGI…VLYV), and 162–182 (LIMG…IAPM). The 98-residue stretch at 293–390 (HGPRNAVMLI…ITVDEEGYLI (98 aa)) folds into the Rieske domain. [2Fe-2S] cluster-binding residues include C333, H335, C352, and H355. C338 and C354 form a disulfide bridge.

The protein belongs to the Rieske iron-sulfur protein family. In terms of assembly, the cytochrome bc1 complex is composed of a cytochrome b (QcrB), the Rieske iron-sulfur protein (QcrA) and a diheme cytochrome c (QcrC) subunit. The bc1 complex forms a supercomplex with cytochrome c oxidase (cytochrome aa3). [2Fe-2S] cluster serves as cofactor.

It localises to the cell membrane. Its function is as follows. Iron-sulfur subunit of the cytochrome bc1 complex, an essential component of the respiratory electron transport chain required for ATP synthesis. The bc1 complex catalyzes the oxidation of menaquinol and the reduction of cytochrome c in the respiratory chain. The bc1 complex operates through a Q-cycle mechanism that couples electron transfer to generation of the proton gradient that drives ATP synthesis. The polypeptide is Cytochrome bc1 complex Rieske iron-sulfur subunit (qcrA) (Corynebacterium glutamicum (strain ATCC 13032 / DSM 20300 / JCM 1318 / BCRC 11384 / CCUG 27702 / LMG 3730 / NBRC 12168 / NCIMB 10025 / NRRL B-2784 / 534)).